A 93-amino-acid chain; its full sequence is Alpha-defensin 10 (93 aa).

Positions 1–19 (MKTLVLLSALVLLAFQVQA) are cleaved as a signal peptide. The propeptide occupies 20–58 (DPIQNTDEETKTEEQPGEDDQAVSVSFGDPEGSSLQEES). The segment at 22–56 (IQNTDEETKTEEQPGEDDQAVSVSFGDPEGSSLQE) is disordered. Intrachain disulfides connect Cys64/Cys92, Cys66/Cys81, and Cys71/Cys91.

This sequence belongs to the alpha-defensin family. Paneth cells of the small bowel.

It localises to the secreted. In terms of biological role, probably contributes to the antimicrobial barrier function of the small bowel mucosa. This chain is Alpha-defensin 10 (Defa10), found in Mus musculus (Mouse).